The primary structure comprises 219 residues: Imidazole glycerol phosphate synthase subunit HisH (219 aa).

Residues 2–218 (KVVVIDSGTG…MVWTPEGTSG (217 aa)) form the Glutamine amidotransferase type-1 domain. The active-site Nucleophile is cysteine 87. Catalysis depends on residues histidine 193 and glutamate 195.

In terms of assembly, heterodimer of HisH and HisF.

Its subcellular location is the cytoplasm. It carries out the reaction 5-[(5-phospho-1-deoxy-D-ribulos-1-ylimino)methylamino]-1-(5-phospho-beta-D-ribosyl)imidazole-4-carboxamide + L-glutamine = D-erythro-1-(imidazol-4-yl)glycerol 3-phosphate + 5-amino-1-(5-phospho-beta-D-ribosyl)imidazole-4-carboxamide + L-glutamate + H(+). It catalyses the reaction L-glutamine + H2O = L-glutamate + NH4(+). It functions in the pathway amino-acid biosynthesis; L-histidine biosynthesis; L-histidine from 5-phospho-alpha-D-ribose 1-diphosphate: step 5/9. IGPS catalyzes the conversion of PRFAR and glutamine to IGP, AICAR and glutamate. The HisH subunit catalyzes the hydrolysis of glutamine to glutamate and ammonia as part of the synthesis of IGP and AICAR. The resulting ammonia molecule is channeled to the active site of HisF. In Granulibacter bethesdensis (strain ATCC BAA-1260 / CGDNIH1), this protein is Imidazole glycerol phosphate synthase subunit HisH.